The chain runs to 118 residues: MKTYAIIEAGGEQLQVEPGRFYNIRHLSLRGVNFWGQNTKLLLYRVLMIRHQSATVLGNPWVQNATVKGRILDARRDDKLVIYKMRAKKKTRRKRGHRQGLTRFVVDAICLNGKVLLD.

It belongs to the bacterial ribosomal protein bL21 family. Part of the 50S ribosomal subunit.

Its subcellular location is the plastid. The protein localises to the chloroplast. This protein binds to 23S rRNA. This Zygnema circumcarinatum (Green alga) protein is Large ribosomal subunit protein bL21c.